The sequence spans 247 residues: Carboxy-S-adenosyl-L-methionine synthase (247 aa).

S-adenosyl-L-methionine contacts are provided by residues Tyr39, 64-66, 89-90, 117-118, Asn132, and Arg199; these read GCS, DN, and DI.

This sequence belongs to the class I-like SAM-binding methyltransferase superfamily. Cx-SAM synthase family. Homodimer.

The catalysed reaction is prephenate + S-adenosyl-L-methionine = carboxy-S-adenosyl-L-methionine + 3-phenylpyruvate + H2O. Functionally, catalyzes the conversion of S-adenosyl-L-methionine (SAM) to carboxy-S-adenosyl-L-methionine (Cx-SAM). The chain is Carboxy-S-adenosyl-L-methionine synthase from Escherichia coli O127:H6 (strain E2348/69 / EPEC).